Consider the following 504-residue polypeptide: Probable GTP-binding protein OBGC2 (504 aa).

Over residues 24–39 the composition is skewed to basic and acidic residues; sequence AHRDARPALRLPELHA. Disordered regions lie at residues 24-46 and 93-122; these read AHRDARPALRLPELHATRRRRNN and VLAMPASPSTDAPKSPRRRSDKGKRSGVKK. Residues 73-276 form the Obg domain; that stretch reads HKYFDHAVVT…VSLELILRVV (204 aa). Residues 107-122 show a composition bias toward basic residues; that stretch reads SPRRRSDKGKRSGVKK. The OBG-type G domain occupies 277-494; sequence ADVGLVGLPN…MLKEIRAALR (218 aa). GTP-binding positions include 283–290 and 337–341; these read GLPNAGKS and DLPGL. Residues 436–452 show a composition bias toward polar residues; it reads SEDSLNGNTGEHNTSSE. A disordered region spans residues 436–463; that stretch reads SEDSLNGNTGEHNTSSETKVEGGEKELR. The span at 453–463 shows a compositional bias: basic and acidic residues; the sequence is TKVEGGEKELR.

It belongs to the TRAFAC class OBG-HflX-like GTPase superfamily. OBG GTPase family.

Functionally, may bind GTP and have GTPase activity. This Oryza sativa subsp. japonica (Rice) protein is Probable GTP-binding protein OBGC2.